The following is a 728-amino-acid chain: MLPALLPLLLPALLPGAGGGRCPQRCACTQPALRCPTPPPGARPAPARASFTHLPVKVIPSHAFEGLRDAFIIEISQSDSLERIEASAFDSLPALSEILILNTKNLLHIEDGAFRNLPRLKYLSICNTGIIEFPDLTQIFSSEAHFILELCDNLRMTTIPQNAFQGMSNESLTLKLYKNGFEDIHSHAFNGTKLNQLILKDNKNLRRIHNDALRGATGPDVLDISSTALESLPSYGLEAIQVLNAMSSYSLKRLPPLDKFSSLLEAVLTYPSHCCAFQNLRTEKQNSLLSIFDNFSKQCESTMRKPASEVFYRDASSNTSLWPAEKHMYPLETGEEAFPYSYSTVFYEDEMTGFDFEYDFCQPKILTCTPEPDAFNPCEDILGYSFLRVLIWFINILALAGNFIVLLVLITSHYKLTVPRFLMCNLSFADFCMGLYLLLIASVDAQTSGQYYNHAIDWQTGSGCSTAGFFTVFASELSVYTLTVITIERWHTITYAMQLDRKLRLRHAVPIMLGGWVFSILIAVLPLLGVSSYMKVSICLPMDIETGLSQAYILLILMLNVIAFLVICACYIKIYVAVQNPELVAANKDTKIAKRMAILIFTDFTCMAPISFFAISAAIKVPLITVTNSKILLVLFYPVNSCANPFLYAIFTKAFQRDFFLLMSKLGCCKSRAELYRVNYFSAYTPNCKNGSSAPGPSKASQALLLLSASEKLCKTRRSTKKSQPECQ.

The signal sequence occupies residues M1–G19. At G20–V389 the chain is on the extracellular side. LRR repeat units lie at residues L92–N116, L117–S142, A144–G166, S168–G191, K193–G215, and A216–A239. A helical membrane pass occupies residues L390–I410. Over T411–R420 the chain is Cytoplasmic. A helical transmembrane segment spans residues F421–A441. Topologically, residues S442–T466 are extracellular. The cysteines at positions 464 and 539 are disulfide-linked. The helical transmembrane segment at A467–I487 threads the bilayer. The Cytoplasmic portion of the chain corresponds to E488–H507. A helical transmembrane segment spans residues A508–L528. Topologically, residues G529–A551 are extracellular. The chain crosses the membrane as a helical span at residues Y552–I572. The Cytoplasmic segment spans residues K573 to R595. Residues M596–S616 traverse the membrane as a helical segment. Topologically, residues A617–K630 are extracellular. The helical transmembrane segment at I631 to F651 threads the bilayer. Topologically, residues T652–Q728 are cytoplasmic.

This sequence belongs to the G-protein coupled receptor 1 family. FSH/LSH/TSH subfamily. In terms of tissue distribution, expressed in ovarian follicle granulosa cells. Expressed in ovarian follicle theca cells.

It localises to the cell membrane. In terms of biological role, receptor for lutropin-choriogonadotropic hormone. The activity of this receptor is mediated by G proteins which activate adenylate cyclase. This is Lutropin-choriogonadotropic hormone receptor from Gallus gallus (Chicken).